The sequence spans 367 residues: Flagellin 2 (367 aa).

It belongs to the bacterial flagellin family.

It localises to the secreted. The protein resides in the bacterial flagellum. Its function is as follows. Flagellin is the subunit protein which polymerizes to form the filaments of bacterial flagella. This chain is Flagellin 2 (fliC2), found in Proteus mirabilis.